The primary structure comprises 340 residues: MKTRSQIEDMVRNASYTRDVMTFLCENNLDPDKVNRVIHHFKYTNSSEWVRNFSKAGYITQMTAREQLTDFCKTIDYKNPLFVQGVGQSKVDLSSGFFNPNHYRIEWRFIALFRRQLKQILSTASRLKGSDINLKNLKFDGYTLQMEVRPLKENNRTARISFKPNTKNSLSICECLKSQLTEAFKYMDVVAAVQSKILPRFERFKLDTTSYELDMIVSFKYEFLRKDEVTQEKKQEVQDNLNLSNYLSNDPKFWMYSSGNKDAWKFNKVNFLPVENPSLKPVEKWHADAIEKSLKAVDAELVKATNEVLEAEKALEQAQSRVQNLTKQRSKLNNALNALN.

This is an uncharacterized protein from Enterobacteria phage T4 (Bacteriophage T4).